The primary structure comprises 404 residues: Lipase lipl-3 (404 aa).

An N-terminal signal peptide occupies residues 1 to 20; that stretch reads MCSSLCALLLVILAVHNVHA. N-linked (GlcNAc...) asparagine glycosylation occurs at Asn65. Ser168 serves as the catalytic Nucleophile. N-linked (GlcNAc...) asparagine glycosylation is present at Asn272. Catalysis depends on charge relay system residues Asp344 and His376.

Belongs to the AB hydrolase superfamily. Lipase family.

The protein localises to the secreted. It localises to the lysosome lumen. Its function is as follows. Lipase that, together with lipl-1, plays a role in the response to nutrient deprivation by controlling lipid metabolism. Specifically, involved in the breakdown of lipids during lipophagy, a process during which lipids contained in lipid droplets that have been delivered to lysosomes by autophagy are degraded. This chain is Lipase lipl-3, found in Caenorhabditis elegans.